A 967-amino-acid chain; its full sequence is Kinesin heavy chain (967 aa).

Residues 8-326 (NIKVICRVRP…LLFGQRAKTI (319 aa)) form the Kinesin motor domain. Residue 85 to 92 (GQTSSGKT) participates in ATP binding. The tract at residues 173–314 (VSSPEEVMEV…PASYNESETK (142 aa)) is microtubule-binding. Disordered regions lie at residues 387-411 (VPAE…NEGD) and 923-967 (KPIR…ESKA). Residues 392 to 861 (PATSTTSLAG…RDNADLRCEL (470 aa)) are a coiled coil. The segment at 862-967 (PKLEKRLRAT…PIRMAPESKA (106 aa)) is globular. The segment covering 949 to 958 (QNGPMITSTP) has biased composition (polar residues).

Belongs to the TRAFAC class myosin-kinesin ATPase superfamily. Kinesin family. Kinesin subfamily. In terms of assembly, oligomer composed of two heavy chains and two light chains. Interacts with amyloid-beta precursor-like protein (via cytoplasmic domain).

The protein localises to the cytoplasm. It is found in the cytoskeleton. Its subcellular location is the cell projection. The protein resides in the axon. Kinesin is a microtubule-associated force-producing protein that may play a role in organelle transport. The polypeptide is Kinesin heavy chain (Doryteuthis pealeii (Longfin inshore squid)).